Here is a 662-residue protein sequence, read N- to C-terminus: Glycogen debranching enzyme (662 aa).

The active-site Nucleophile is Asp-338. Residue Glu-373 is the Proton donor of the active site.

It belongs to the glycosyl hydrolase 13 family.

The catalysed reaction is Hydrolysis of (1-&gt;6)-alpha-D-glucosidic linkages to branches with degrees of polymerization of three or four glucose residues in limit dextrin.. It participates in glycan degradation; glycogen degradation. Functionally, removes maltotriose and maltotetraose chains that are attached by 1,6-alpha-linkage to the limit dextrin main chain, generating a debranched limit dextrin. The protein is Glycogen debranching enzyme of Yersinia pseudotuberculosis serotype O:1b (strain IP 31758).